We begin with the raw amino-acid sequence, 221 residues long: MTDICDANKFKHRFRGYFPVVIDVETAGFNANTDALLEIAVSLLKMNSDGVIVLDRTLHFNIEPFEGANLEPAALAFNGIDPTNPLRGAVDEKVAFLEIFKEVKKAQKAADCHRSIIVAHNAAFDLGFVNKAIERNGLKRSPFHPFASFDTATLAGLAIGHTVLAKACKMAGIDFDNKEAHSALYDTERTAELFCLIVNRWKALGGWPLAAVEDDSDSTSE.

The Exonuclease domain maps to 20 to 194 (VVIDVETAGF…YDTERTAELF (175 aa)). Mg(2+) is bound by residues aspartate 23, glutamate 25, histidine 181, and aspartate 186. Histidine 181 (proton donor/acceptor) is an active-site residue.

This sequence belongs to the RNase T family. In terms of assembly, homodimer. Mg(2+) serves as cofactor.

In terms of biological role, trims short 3' overhangs of a variety of RNA species, leaving a one or two nucleotide 3' overhang. Responsible for the end-turnover of tRNA: specifically removes the terminal AMP residue from uncharged tRNA (tRNA-C-C-A). Also appears to be involved in tRNA biosynthesis. The sequence is that of Ribonuclease T from Shewanella frigidimarina (strain NCIMB 400).